The chain runs to 123 residues: Small ribosomal subunit protein uS12 (123 aa).

D89 carries the post-translational modification 3-methylthioaspartic acid. The disordered stretch occupies residues 101 to 123 (SLDTSGVKDRKQGRSKYGAKRPK). A compositionally biased stretch (basic residues) spans 113-123 (GRSKYGAKRPK).

It belongs to the universal ribosomal protein uS12 family. In terms of assembly, part of the 30S ribosomal subunit. Contacts proteins S8 and S17. May interact with IF1 in the 30S initiation complex.

Functionally, with S4 and S5 plays an important role in translational accuracy. Interacts with and stabilizes bases of the 16S rRNA that are involved in tRNA selection in the A site and with the mRNA backbone. Located at the interface of the 30S and 50S subunits, it traverses the body of the 30S subunit contacting proteins on the other side and probably holding the rRNA structure together. The combined cluster of proteins S8, S12 and S17 appears to hold together the shoulder and platform of the 30S subunit. The protein is Small ribosomal subunit protein uS12 of Stutzerimonas stutzeri (strain A1501) (Pseudomonas stutzeri).